The primary structure comprises 788 residues: Multi-functional prenyltransferase ltmE (788 aa).

Substrate contacts are provided by Lys-18 and His-51. Asp-58 provides a ligand contact to Mg(2+). Substrate contacts are provided by Arg-67, Lys-151, Thr-152, Gln-182, Asn-189, and Lys-199. Residues 283-337 (DTLDGDDLTRPSTITQHEQDDHVDRAAIDAKSDASGSSNKSLTPPETAPTTDTLS) are disordered. The segment covering 299–314 (HEQDDHVDRAAIDAKS) has biased composition (basic and acidic residues). The span at 316-337 (ASGSSNKSLTPPETAPTTDTLS) shows a compositional bias: polar residues. 404-405 (MA) serves as a coordination point for L-tryptophan. Substrate is bound by residues Arg-427, Arg-599, Lys-601, Tyr-603, and Tyr-687.

This sequence in the N-terminal section; belongs to the FPP/GGPP synthase family. The protein in the C-terminal section; belongs to the tryptophan dimethylallyltransferase family. Requires Mg(2+) as cofactor.

It functions in the pathway secondary metabolite biosynthesis. In terms of biological role, multi-functional prenyltransferase; part of the gene cluster that mediates the biosynthesis of lolitrems, indole-diterpene mycotoxins that are potent tremorgens in mammals, and are synthesized by clavicipitaceous fungal endophytes in association with their grass hosts. The geranylgeranyl diphosphate (GGPP) synthase ltmG is proposed to catalyze the first step in lolitrem biosynthesis. LtmG catalyzes a series of iterative condensations of isopentenyl diphosphate (IPP) with dimethylallyl diphosphate (DMAPP), geranyl diphosphate (GPP), and farnesyl diphosphate (FPP), to form GGPP. GGPP then condenses with indole-3-glycerol phosphate to form 3-geranylgeranylindole, an acyclic intermediate, to be incorporated into paxilline. Either ltmG or ltmC could be responsible for this step, as both are putative prenyl transferases. The FAD-dependent monooxygenase ltmM then catalyzes the epoxidation of the two terminal alkenes of the geranylgeranyl moiety, which is subsequently cyclized by ltmB, to paspaline. The cytochrome P450 monooxygenases ltmQ and ltmP can sequentially oxidize paspaline to terpendole E and terpendole F. Alternatively, ltmP converts paspaline to an intermediate which is oxidized by ltmQ to terpendole F. LtmF, ltmK, ltmE and ltmJ appear to be unique to the epichloe endophytes. The prenyltransferase ltmF is involved in the 27-hydroxyl-O-prenylation. The cytochrome P450 monooxygenase ltmK is required for the oxidative acetal ring formation. The multi-functional prenyltransferase ltmE is required for C20- and C21-prenylations of the indole ring of paspalanes and acts together with the cytochrome P450 monooxygenase ltmJ to yield lolitremanes by multiple oxidations and ring closures. The stereoisomer pairs of lolitriol and lolitrem N or lolitrem B and lolitrem F may be attributed to variations in the way in which ring closure can occur under the action of ltmJ. While the major product of this pathway is lolitrem B, the prenyl transferases and cytochrome P450 monooxygenases identified in this pathway have a remarkable versatility in their regio- and stereo-specificities to generate a diverse range of metabolites that are products of a metabolic grid rather than a linear pathway. In Epichloe festucae var. lolii (Neotyphodium lolii), this protein is Multi-functional prenyltransferase ltmE.